Consider the following 398-residue polypeptide: S-adenosylmethionine synthase (398 aa).

Position 136–141 (136–141 (GTGSSD)) interacts with ATP.

It belongs to the AdoMet synthase 2 family. Mg(2+) serves as cofactor.

The catalysed reaction is L-methionine + ATP + H2O = S-adenosyl-L-methionine + phosphate + diphosphate. It participates in amino-acid biosynthesis; S-adenosyl-L-methionine biosynthesis; S-adenosyl-L-methionine from L-methionine: step 1/1. Functionally, catalyzes the formation of S-adenosylmethionine from methionine and ATP. In Methanosarcina barkeri (strain Fusaro / DSM 804), this protein is S-adenosylmethionine synthase.